The following is a 284-amino-acid chain: Formamidopyrimidine-DNA glycosylase (284 aa).

The active-site Schiff-base intermediate with DNA is the Pro2. The Proton donor role is filled by Glu3. Residue Lys58 is the Proton donor; for beta-elimination activity of the active site. Residues His97, Arg120, and Arg165 each coordinate DNA. The FPG-type zinc-finger motif lies at Phe250–His284. Arg274 acts as the Proton donor; for delta-elimination activity in catalysis.

This sequence belongs to the FPG family. Monomer. Requires Zn(2+) as cofactor.

The catalysed reaction is Hydrolysis of DNA containing ring-opened 7-methylguanine residues, releasing 2,6-diamino-4-hydroxy-5-(N-methyl)formamidopyrimidine.. The enzyme catalyses 2'-deoxyribonucleotide-(2'-deoxyribose 5'-phosphate)-2'-deoxyribonucleotide-DNA = a 3'-end 2'-deoxyribonucleotide-(2,3-dehydro-2,3-deoxyribose 5'-phosphate)-DNA + a 5'-end 5'-phospho-2'-deoxyribonucleoside-DNA + H(+). Its function is as follows. Involved in base excision repair of DNA damaged by oxidation or by mutagenic agents. Acts as a DNA glycosylase that recognizes and removes damaged bases. Has a preference for oxidized purines, such as 7,8-dihydro-8-oxoguanine (8-oxoG). Has AP (apurinic/apyrimidinic) lyase activity and introduces nicks in the DNA strand. Cleaves the DNA backbone by beta-delta elimination to generate a single-strand break at the site of the removed base with both 3'- and 5'-phosphates. In Cupriavidus pinatubonensis (strain JMP 134 / LMG 1197) (Cupriavidus necator (strain JMP 134)), this protein is Formamidopyrimidine-DNA glycosylase.